The chain runs to 251 residues: Large ribosomal subunit protein uL3 (251 aa).

Q151 is subject to N5-methylglutamine. Residues 221 to 251 are disordered; it reads GLKQAANSNDSAAADTPAEVAAVEATEGQEG. A compositionally biased stretch (low complexity) spans 225–251; that stretch reads AANSNDSAAADTPAEVAAVEATEGQEG.

This sequence belongs to the universal ribosomal protein uL3 family. Part of the 50S ribosomal subunit. Forms a cluster with proteins L14 and L19. Methylated by PrmB.

Its function is as follows. One of the primary rRNA binding proteins, it binds directly near the 3'-end of the 23S rRNA, where it nucleates assembly of the 50S subunit. The chain is Large ribosomal subunit protein uL3 from Novosphingobium aromaticivorans (strain ATCC 700278 / DSM 12444 / CCUG 56034 / CIP 105152 / NBRC 16084 / F199).